The primary structure comprises 391 residues: Elongation factor Tu (391 aa).

The tr-type G domain occupies Lys10–Glu201. Residues Gly19–Thr26 form a G1 region. Gly19 to Thr26 is a binding site for GTP. Residue Thr26 coordinates Mg(2+). The interval Gly55–Ser59 is G2. The interval Asp76–Gly79 is G3. GTP is bound by residues Asp76–His80 and Asn131–Asp134. Residues Asn131–Asp134 form a G4 region. Residues Ser169–Leu171 form a G5 region.

Belongs to the TRAFAC class translation factor GTPase superfamily. Classic translation factor GTPase family. EF-Tu/EF-1A subfamily. As to quaternary structure, monomer.

It localises to the cytoplasm. It catalyses the reaction GTP + H2O = GDP + phosphate + H(+). Functionally, GTP hydrolase that promotes the GTP-dependent binding of aminoacyl-tRNA to the A-site of ribosomes during protein biosynthesis. The protein is Elongation factor Tu of Paracoccus denitrificans (strain Pd 1222).